An 875-amino-acid polypeptide reads, in one-letter code: Peptidyl-glycine alpha-amidating monooxygenase B (875 aa).

An N-terminal signal peptide occupies residues 1–39; sequence MDMASLISSLLVLFLIFQNSCYCFRSPLSVFKRYEESTR. A peptidylglycine alpha-hydroxylating monooxygenase region spans residues 3-394; that stretch reads MASLISSLLV…KREEEEVLNQ (392 aa). Topologically, residues 40–763 are intragranular; that stretch reads SLSNDCLGTT…PSVVQESSAG (724 aa). 5 disulfide bridges follow: cysteine 45–cysteine 184, cysteine 79–cysteine 124, cysteine 112–cysteine 129, cysteine 225–cysteine 332, and cysteine 291–cysteine 313. Positions 105 and 106 each coordinate Cu(2+). Histidine 170, histidine 240, histidine 242, and methionine 312 together coordinate Cu(2+). The peptidyl-alpha-hydroxyglycine alpha-amidating lyase stretch occupies residues 395–716; it reads DVHLEEDTDW…SPSKAEHRSV (322 aa). A protein is bound at residue arginine 430. Asparagine 465 is a glycosylation site (N-linked (GlcNAc...) asparagine). NHL repeat units follow at residues 467–508, 516–561, and 569–613; these read SKVL…VGAE, LGRA…FSPN, and GEET…FHAK. 2 disulfide bridges follow: cysteine 530–cysteine 551 and cysteine 598–cysteine 609. A protein-binding residues include tyrosine 550 and arginine 602. Asparagine 662 carries an N-linked (GlcNAc...) asparagine glycan. The stretch at 666-709 is one NHL 4 repeat; that stretch reads GDILDTFIPARKNFEMPHDIAAGDDGTVYVGDAHANAVWKFSPS. The disordered stretch occupies residues 735-755; that stretch reads HMRSRPKTNESVGQQTQEKPS. N-linked (GlcNAc...) asparagine glycosylation occurs at asparagine 743. A compositionally biased stretch (polar residues) spans 743-755; sequence NESVGQQTQEKPS. A helical membrane pass occupies residues 764-787; that stretch reads VSFVLIITLLIIPVVVLIAIAIFI. Residues 788–875 lie on the Cytoplasmic side of the membrane; that stretch reads RWRKVRMYGG…APPIPPVSSS (88 aa). The segment at 837-875 is disordered; sequence KGFDRLSTEGSDQEKDDDDDGSDSEEEYSAPPIPPVSSS. Residues 850–864 are compositionally biased toward acidic residues; that stretch reads EKDDDDDGSDSEEEY.

It in the C-terminal section; belongs to the peptidyl-alpha-hydroxyglycine alpha-amidating lyase family. In the N-terminal section; belongs to the copper type II ascorbate-dependent monooxygenase family. In terms of assembly, monomer. Requires Zn(2+) as cofactor. The cofactor is Cu(2+).

The protein localises to the cytoplasmic vesicle. Its subcellular location is the secretory vesicle membrane. The catalysed reaction is a [peptide]-C-terminal glycine + 2 L-ascorbate + O2 = a [peptide]-C-terminal (2S)-2-hydroxyglycine + 2 monodehydro-L-ascorbate radical + H2O. It catalyses the reaction a [peptide]-C-terminal (2S)-2-hydroxyglycine = a [peptide]-C-terminal amide + glyoxylate. Its function is as follows. Bifunctional enzyme that catalyzes amidation of the C-terminus of proteins. Alpha-amidation is present at the C-terminus of many endocrine hormones and neuropeptides and is required for their activity. C-terminal amidation also takes place in response to protein fragmentation triggered by oxidative stress, promoting degradation of amidated protein fragments by the proteasome. Alpha-amidation involves two sequential reactions, both of which are catalyzed by separate catalytic domains of the enzyme. The first step, catalyzed by peptidyl alpha-hydroxylating monooxygenase (PHM) domain, is the copper-, ascorbate-, and O2- dependent stereospecific hydroxylation (with S stereochemistry) at the alpha-carbon (C-alpha) of the C-terminal glycine of the peptidylglycine substrate. The second step, catalyzed by the peptidylglycine amidoglycolate lyase (PAL) domain, is the zinc-dependent cleavage of the N-C-alpha bond, producing the alpha-amidated peptide and glyoxylate. The protein is Peptidyl-glycine alpha-amidating monooxygenase B (pam-b) of Xenopus laevis (African clawed frog).